Reading from the N-terminus, the 336-residue chain is Ketol-acid reductoisomerase (NADP(+)) 1 (336 aa).

One can recognise a KARI N-terminal Rossmann domain in the interval 2–181 (AKVYYEKDVT…GATRAGVLET (180 aa)). NADP(+) is bound by residues 25-28 (YGSQ), R48, S52, and 82-85 (DELQ). H107 is an active-site residue. G133 is a binding site for NADP(+). One can recognise a KARI C-terminal knotted domain in the interval 182–327 (TFKEETETDL…RKLREMMPFV (146 aa)). Mg(2+) contacts are provided by D190, E194, E226, and E230. S251 contributes to the substrate binding site.

It belongs to the ketol-acid reductoisomerase family. It depends on Mg(2+) as a cofactor.

It catalyses the reaction (2R)-2,3-dihydroxy-3-methylbutanoate + NADP(+) = (2S)-2-acetolactate + NADPH + H(+). The enzyme catalyses (2R,3R)-2,3-dihydroxy-3-methylpentanoate + NADP(+) = (S)-2-ethyl-2-hydroxy-3-oxobutanoate + NADPH + H(+). The protein operates within amino-acid biosynthesis; L-isoleucine biosynthesis; L-isoleucine from 2-oxobutanoate: step 2/4. It participates in amino-acid biosynthesis; L-valine biosynthesis; L-valine from pyruvate: step 2/4. In terms of biological role, involved in the biosynthesis of branched-chain amino acids (BCAA). Catalyzes an alkyl-migration followed by a ketol-acid reduction of (S)-2-acetolactate (S2AL) to yield (R)-2,3-dihydroxy-isovalerate. In the isomerase reaction, S2AL is rearranged via a Mg-dependent methyl migration to produce 3-hydroxy-3-methyl-2-ketobutyrate (HMKB). In the reductase reaction, this 2-ketoacid undergoes a metal-dependent reduction by NADPH to yield (R)-2,3-dihydroxy-isovalerate. The sequence is that of Ketol-acid reductoisomerase (NADP(+)) 1 from Bacillus cereus (strain ATCC 10987 / NRS 248).